A 647-amino-acid chain; its full sequence is DNA mismatch repair protein MutL (647 aa).

This sequence belongs to the DNA mismatch repair MutL/HexB family.

This protein is involved in the repair of mismatches in DNA. It is required for dam-dependent methyl-directed DNA mismatch repair. May act as a 'molecular matchmaker', a protein that promotes the formation of a stable complex between two or more DNA-binding proteins in an ATP-dependent manner without itself being part of a final effector complex. The sequence is that of DNA mismatch repair protein MutL from Bacillus cereus (strain 03BB102).